We begin with the raw amino-acid sequence, 310 residues long: Calbindin-32 (310 aa).

EF-hand domains follow at residues 35–70 (LSAN…FVSS), 84–120 (TMLE…EENF), 131–166 (ESSV…LLKE), 177–212 (KLIE…KENF), 224–259 (LTKE…LLEL), and 283–304 (TDKH…LAKI). 25 residues coordinate Ca(2+): Asp48, Asp50, Asn52, Tyr54, Glu59, Asp98, Asn100, Asp102, Lys104, Glu109, Asp144, Asp146, Ser148, Tyr150, Glu155, Asp190, Asn192, Asp194, Arg196, Glu201, Asp237, Asp239, Ser241, Thr243, and Glu248.

It belongs to the calbindin family. As to expression, expressed in a large number of neuron of the brain and the thoracic ganglion as well as in two small muscles of the thorax.

In Drosophila melanogaster (Fruit fly), this protein is Calbindin-32 (Cbp53E).